The primary structure comprises 273 residues: Tyrosinase (273 aa).

The N-terminal stretch at Met-1 to Gly-18 is a signal peptide. 2 N-linked (GlcNAc...) asparagine glycosylation sites follow: Asn-86 and Asn-169. Residues His-180, His-202, and His-211 each contribute to the Cu cation site. Asn-230 is a glycosylation site (N-linked (GlcNAc...) asparagine).

This sequence belongs to the tyrosinase family. Cu(2+) is required as a cofactor.

Its subcellular location is the melanosome membrane. It carries out the reaction 2 L-dopa + O2 = 2 L-dopaquinone + 2 H2O. It catalyses the reaction L-tyrosine + O2 = L-dopaquinone + H2O. Functionally, this is a copper-containing oxidase that functions in the formation of pigments such as melanins and other polyphenolic compounds. This Pelodiscus sinensis (Chinese softshell turtle) protein is Tyrosinase (TYR).